A 348-amino-acid chain; its full sequence is Histidinol-phosphate aminotransferase (348 aa).

The segment at 1–31 (MLPTRDCVRQTPAYTPGEQPQTAGFTKLNTN) is disordered. The span at 18-31 (EQPQTAGFTKLNTN) shows a compositional bias: polar residues. Position 207 is an N6-(pyridoxal phosphate)lysine (K207).

It belongs to the class-II pyridoxal-phosphate-dependent aminotransferase family. Histidinol-phosphate aminotransferase subfamily. Homodimer. Pyridoxal 5'-phosphate is required as a cofactor.

The enzyme catalyses L-histidinol phosphate + 2-oxoglutarate = 3-(imidazol-4-yl)-2-oxopropyl phosphate + L-glutamate. The protein operates within amino-acid biosynthesis; L-histidine biosynthesis; L-histidine from 5-phospho-alpha-D-ribose 1-diphosphate: step 7/9. This chain is Histidinol-phosphate aminotransferase, found in Microcystis aeruginosa (strain NIES-843 / IAM M-2473).